Here is a 131-residue protein sequence, read N- to C-terminus: Large ribosomal subunit protein bL19 (131 aa).

Positions 1-11 (MEETMNNQEAP) are enriched in polar residues. The segment at 1 to 20 (MEETMNNQEAPETSEEETVA) is disordered.

This sequence belongs to the bacterial ribosomal protein bL19 family.

Its function is as follows. This protein is located at the 30S-50S ribosomal subunit interface and may play a role in the structure and function of the aminoacyl-tRNA binding site. The protein is Large ribosomal subunit protein bL19 of Dehalococcoides mccartyi (strain ATCC BAA-2100 / JCM 16839 / KCTC 5957 / BAV1).